Reading from the N-terminus, the 507-residue chain is Probable cytosol aminopeptidase (507 aa).

2 residues coordinate Mn(2+): Lys-275 and Asp-280. Residue Lys-287 is part of the active site. Mn(2+)-binding residues include Asp-298, Asp-357, and Glu-359. Arg-361 is an active-site residue.

It belongs to the peptidase M17 family. Mn(2+) serves as cofactor.

It localises to the cytoplasm. It catalyses the reaction Release of an N-terminal amino acid, Xaa-|-Yaa-, in which Xaa is preferably Leu, but may be other amino acids including Pro although not Arg or Lys, and Yaa may be Pro. Amino acid amides and methyl esters are also readily hydrolyzed, but rates on arylamides are exceedingly low.. The enzyme catalyses Release of an N-terminal amino acid, preferentially leucine, but not glutamic or aspartic acids.. In terms of biological role, presumably involved in the processing and regular turnover of intracellular proteins. Catalyzes the removal of unsubstituted N-terminal amino acids from various peptides. This chain is Probable cytosol aminopeptidase, found in Acidobacterium capsulatum (strain ATCC 51196 / DSM 11244 / BCRC 80197 / JCM 7670 / NBRC 15755 / NCIMB 13165 / 161).